The following is a 508-amino-acid chain: Fasciclin-3 (508 aa).

The signal sequence occupies residues 1-20 (MSRIVFICLAAILTDALTWA). The residue at position 21 (glutamine 21) is a Pyrrolidone carboxylic acid. The Extracellular segment spans residues 21-346 (QVNVEPNTAL…SSKPPSSSLD (326 aa)). The Ig-like V-type domain occupies 44–106 (GRSINYCRIE…NGQVKCSLGV (63 aa)). 2 Ig-like C2-type domains span residues 126–223 (PIIE…ESVP) and 236–310 (APVH…GLTL). An intrachain disulfide couples cysteine 150 to cysteine 211. Asparagine 160, asparagine 257, and asparagine 300 each carry an N-linked (GlcNAc...) asparagine glycan. A helical transmembrane segment spans residues 347 to 370 (VAAIVGIVVAVAVLVLVVLLIVFA). Residues 371 to 508 (RATGRWCFGG…QSTSPVWTFK (138 aa)) are Cytoplasmic-facing. Residues 381–439 (KSIKTPTNETSDTESADIKATSTATATTTMGGVGVSAEEEETVNEQESPQEQQQQQQKK) form a disordered region. Residue serine 382 is modified to Phosphoserine. Composition is skewed to low complexity over residues 400-409 (ATSTATATTT) and 425-437 (EQES…QQQQ). At serine 459 the chain carries Phosphoserine.

Expressed on different subsets of axon bundles (fascicles) in insect embryos.

The protein resides in the membrane. Functionally, mediates cell adhesion in a Ca(2+)-independent manner. It plays a role in axon outgrowth, guidance and fasciculation of the developing nervous system. Function in neurons is essential for adult survival, and is important for climbing behavior and activity. The sequence is that of Fasciclin-3 (Fas3) from Drosophila melanogaster (Fruit fly).